Here is a 185-residue protein sequence, read N- to C-terminus: Peptidyl-tRNA hydrolase (185 aa).

Residue Tyr14 coordinates tRNA. The active-site Proton acceptor is His19. Positions 64, 66, and 112 each coordinate tRNA.

The protein belongs to the PTH family. In terms of assembly, monomer.

It is found in the cytoplasm. It carries out the reaction an N-acyl-L-alpha-aminoacyl-tRNA + H2O = an N-acyl-L-amino acid + a tRNA + H(+). Its function is as follows. Hydrolyzes ribosome-free peptidyl-tRNAs (with 1 or more amino acids incorporated), which drop off the ribosome during protein synthesis, or as a result of ribosome stalling. In terms of biological role, catalyzes the release of premature peptidyl moieties from peptidyl-tRNA molecules trapped in stalled 50S ribosomal subunits, and thus maintains levels of free tRNAs and 50S ribosomes. The chain is Peptidyl-tRNA hydrolase from Lacticaseibacillus casei (strain BL23) (Lactobacillus casei).